Consider the following 508-residue polypeptide: BICD family-like cargo adapter 2 (508 aa).

The span at 1 to 22 (MSSPDGPSFPSGPLSGGASPSG) shows a compositional bias: low complexity. 3 disordered regions span residues 1–27 (MSSP…EGFF), 132–152 (LGEQ…ALSE), and 300–351 (AHSL…TSLS). 2 coiled-coil regions span residues 64 to 300 (AAEL…SELA) and 353 to 458 (AEIL…DMQV). A compositionally biased stretch (basic and acidic residues) spans 135–149 (QRSEQQDSGRERARA). Residues 470–491 (KELSASASSSTPRRAAPRFSLR) form a disordered region. The segment covering 473 to 489 (SASASSSTPRRAAPRFS) has biased composition (low complexity).

Belongs to the BICDR family. Interacts with RAB13.

The chain is BICD family-like cargo adapter 2 (BICDL2) from Homo sapiens (Human).